The primary structure comprises 154 residues: Protein-export protein SecB (154 aa).

It belongs to the SecB family. In terms of assembly, homotetramer, a dimer of dimers. One homotetramer interacts with 1 SecA dimer.

Its subcellular location is the cytoplasm. Its function is as follows. One of the proteins required for the normal export of preproteins out of the cell cytoplasm. It is a molecular chaperone that binds to a subset of precursor proteins, maintaining them in a translocation-competent state. It also specifically binds to its receptor SecA. The protein is Protein-export protein SecB of Vibrio parahaemolyticus serotype O3:K6 (strain RIMD 2210633).